The following is a 138-amino-acid chain: ATP synthase epsilon chain (138 aa).

This sequence belongs to the ATPase epsilon chain family. As to quaternary structure, F-type ATPases have 2 components, CF(1) - the catalytic core - and CF(0) - the membrane proton channel. CF(1) has five subunits: alpha(3), beta(3), gamma(1), delta(1), epsilon(1). CF(0) has three main subunits: a, b and c.

The protein resides in the cell inner membrane. In terms of biological role, produces ATP from ADP in the presence of a proton gradient across the membrane. This chain is ATP synthase epsilon chain, found in Trichlorobacter lovleyi (strain ATCC BAA-1151 / DSM 17278 / SZ) (Geobacter lovleyi).